The chain runs to 121 residues: MASCLALRVALLLISGVLAPAVLTAEGPQEPDPTLWNEPIELPSGEGPLESTSHNQEFAVSGPPFPTSAPAPEDSTPPARVDQDGGSLGPGAIAAIVIAALLATCVVLALVVVALRKFSAS.

Positions 1–24 (MASCLALRVALLLISGVLAPAVLT) are cleaved as a signal peptide. At 25–92 (AEGPQEPDPT…QDGGSLGPGA (68 aa)) the chain is on the extracellular side. The segment at 26-84 (EGPQEPDPTLWNEPIELPSGEGPLESTSHNQEFAVSGPPFPTSAPAPEDSTPPARVDQD) is disordered. A helical transmembrane segment spans residues 93–113 (IAAIVIAALLATCVVLALVVV). The Cytoplasmic segment spans residues 114 to 121 (ALRKFSAS).

Interacts (via the extracellular domain) with FGF2. As to expression, expressed only in cartilage, including nasal, knee epiphyseal and rib tissues. In proliferation and hypertrophic chondrocytes, detected intracellulary and in the pericellular extracellular matrix. In primary spongiosa, detected only in the extracellular matrix.

Its subcellular location is the membrane. It localises to the cytoplasm. The protein resides in the secreted. It is found in the extracellular space. The protein localises to the extracellular matrix. In terms of biological role, plays a role in the regulation of chondrocyte maturation and postnatal endochondral ossification. May inhibit cell growth stimulation induced by FGF2. The polypeptide is Protein SNORC (Mus musculus (Mouse)).